Consider the following 345-residue polypeptide: Uroporphyrinogen decarboxylase (345 aa).

Substrate contacts are provided by residues 23 to 27 (RQAGR), Asp-73, Tyr-149, Thr-203, and His-319.

The protein belongs to the uroporphyrinogen decarboxylase family. Homodimer.

It is found in the cytoplasm. It catalyses the reaction uroporphyrinogen III + 4 H(+) = coproporphyrinogen III + 4 CO2. Its pathway is porphyrin-containing compound metabolism; protoporphyrin-IX biosynthesis; coproporphyrinogen-III from 5-aminolevulinate: step 4/4. In terms of biological role, catalyzes the decarboxylation of four acetate groups of uroporphyrinogen-III to yield coproporphyrinogen-III. The chain is Uroporphyrinogen decarboxylase from Vesicomyosocius okutanii subsp. Calyptogena okutanii (strain HA).